Reading from the N-terminus, the 393-residue chain is 1-deoxy-D-xylulose 5-phosphate reductoisomerase (393 aa).

Positions 10, 11, 12, 13, 37, and 124 each coordinate NADPH. Lys-125 lines the 1-deoxy-D-xylulose 5-phosphate pocket. Position 126 (Glu-126) interacts with NADPH. Asp-150 lines the Mn(2+) pocket. 4 residues coordinate 1-deoxy-D-xylulose 5-phosphate: Ser-151, Glu-152, Ser-182, and His-205. Mn(2+) is bound at residue Glu-152. Residue Gly-211 participates in NADPH binding. 4 residues coordinate 1-deoxy-D-xylulose 5-phosphate: Ser-218, Asn-223, Lys-224, and Glu-227. Residue Glu-227 coordinates Mn(2+).

Belongs to the DXR family. The cofactor is Mg(2+). Mn(2+) is required as a cofactor.

It catalyses the reaction 2-C-methyl-D-erythritol 4-phosphate + NADP(+) = 1-deoxy-D-xylulose 5-phosphate + NADPH + H(+). The protein operates within isoprenoid biosynthesis; isopentenyl diphosphate biosynthesis via DXP pathway; isopentenyl diphosphate from 1-deoxy-D-xylulose 5-phosphate: step 1/6. Its function is as follows. Catalyzes the NADPH-dependent rearrangement and reduction of 1-deoxy-D-xylulose-5-phosphate (DXP) to 2-C-methyl-D-erythritol 4-phosphate (MEP). The sequence is that of 1-deoxy-D-xylulose 5-phosphate reductoisomerase from Nitrosococcus oceani (strain ATCC 19707 / BCRC 17464 / JCM 30415 / NCIMB 11848 / C-107).